The following is a 165-amino-acid chain: Fatty acid-binding protein homolog 3 (165 aa).

The first 19 residues, 1-19 (MNLYLTLFSFCFLAIMAEA), serve as a signal peptide directing secretion.

This sequence belongs to the calycin superfamily. Fatty-acid binding protein (FABP) family. In terms of tissue distribution, expressed in presumptive hypodermal cells by the comma stage and in posterior body wall muscle cells by the two-fold stage. From L1 to adult stages, expression continues in body wall muscle cells adjacent to the pseudocoelom, while hypodermal expression is extinguished.

The protein localises to the secreted. In terms of biological role, may play a role in sequestering potentially toxic fatty acids and their peroxidation products, or it may be involved in the maintenance of the impermeable lipid layer of the eggshell. The protein is Fatty acid-binding protein homolog 3 (lbp-3) of Caenorhabditis elegans.